The following is a 228-amino-acid chain: Large ribosomal subunit protein uL3 (228 aa).

The interval 135–159 (MKSQRASHGNSRSHNVPGSIGMAQD) is disordered. Polar residues predominate over residues 140-150 (ASHGNSRSHNV). The residue at position 158 (Gln-158) is an N5-methylglutamine.

It belongs to the universal ribosomal protein uL3 family. As to quaternary structure, part of the 50S ribosomal subunit. Forms a cluster with proteins L14 and L19. In terms of processing, methylated by PrmB.

Its function is as follows. One of the primary rRNA binding proteins, it binds directly near the 3'-end of the 23S rRNA, where it nucleates assembly of the 50S subunit. In Albidiferax ferrireducens (strain ATCC BAA-621 / DSM 15236 / T118) (Rhodoferax ferrireducens), this protein is Large ribosomal subunit protein uL3.